We begin with the raw amino-acid sequence, 363 residues long: Histidine biosynthesis bifunctional protein HisB (363 aa).

Positions 1–174 (MTQPTLFIDR…AVTNIGDRQP (174 aa)) are histidinol-phosphatase. Asp9 serves as the catalytic Nucleophile. Residues Asp9 and Asp11 each contribute to the Mg(2+) site. Asp11 acts as the Proton donor in catalysis. 4 residues coordinate Zn(2+): Cys92, His94, Cys100, and Cys102. Asp129 is a Mg(2+) binding site. The segment at 175 to 363 (RYAEVVRKTK…NELPSSKGVL (189 aa)) is imidazoleglycerol-phosphate dehydratase.

The protein in the N-terminal section; belongs to the histidinol-phosphatase family. It in the C-terminal section; belongs to the imidazoleglycerol-phosphate dehydratase family. Requires Mg(2+) as cofactor. The cofactor is Zn(2+).

It localises to the cytoplasm. The enzyme catalyses D-erythro-1-(imidazol-4-yl)glycerol 3-phosphate = 3-(imidazol-4-yl)-2-oxopropyl phosphate + H2O. It catalyses the reaction L-histidinol phosphate + H2O = L-histidinol + phosphate. It participates in amino-acid biosynthesis; L-histidine biosynthesis; L-histidine from 5-phospho-alpha-D-ribose 1-diphosphate: step 6/9. Its pathway is amino-acid biosynthesis; L-histidine biosynthesis; L-histidine from 5-phospho-alpha-D-ribose 1-diphosphate: step 8/9. The protein is Histidine biosynthesis bifunctional protein HisB of Actinobacillus pleuropneumoniae serotype 5b (strain L20).